A 510-amino-acid polypeptide reads, in one-letter code: NAD(P)H-quinone oxidoreductase subunit 2 B, chloroplastic (510 aa).

A run of 13 helical transmembrane segments spans residues 24–44 (LLLF…GLIL), 57–77 (IPWL…ALLF), 99–119 (IFQF…VEYI), 124–144 (MAIT…MFLC), 149–169 (LITI…LSGY), 183–203 (YLLM…WLYG), 227–247 (PGIS…LSPA), 295–315 (WHLH…LIAI), 323–343 (MLAY…IVGD), 347–367 (GYAS…GTFA), 395–415 (ALSL…AGFF), 418–438 (LHLF…IGLL), and 484–504 (MIVC…IIAI).

The protein belongs to the complex I subunit 2 family. As to quaternary structure, NDH is composed of at least 16 different subunits, 5 of which are encoded in the nucleus.

Its subcellular location is the plastid. The protein resides in the chloroplast thylakoid membrane. It carries out the reaction a plastoquinone + NADH + (n+1) H(+)(in) = a plastoquinol + NAD(+) + n H(+)(out). The enzyme catalyses a plastoquinone + NADPH + (n+1) H(+)(in) = a plastoquinol + NADP(+) + n H(+)(out). Functionally, NDH shuttles electrons from NAD(P)H:plastoquinone, via FMN and iron-sulfur (Fe-S) centers, to quinones in the photosynthetic chain and possibly in a chloroplast respiratory chain. The immediate electron acceptor for the enzyme in this species is believed to be plastoquinone. Couples the redox reaction to proton translocation, and thus conserves the redox energy in a proton gradient. The protein is NAD(P)H-quinone oxidoreductase subunit 2 B, chloroplastic of Buxus microphylla (Littleleaf boxwood).